A 390-amino-acid chain; its full sequence is Putative glutamate--cysteine ligase 2 (390 aa).

This sequence belongs to the glutamate--cysteine ligase type 2 family. YbdK subfamily.

The catalysed reaction is L-cysteine + L-glutamate + ATP = gamma-L-glutamyl-L-cysteine + ADP + phosphate + H(+). Its function is as follows. ATP-dependent carboxylate-amine ligase which exhibits weak glutamate--cysteine ligase activity. This is Putative glutamate--cysteine ligase 2 from Chloroflexus aurantiacus (strain ATCC 29366 / DSM 635 / J-10-fl).